The sequence spans 419 residues: Acyl transferase 9 (419 aa).

Residues histidine 161 and aspartate 362 each act as proton acceptor in the active site.

It belongs to the plant acyltransferase family.

Functionally, involved in the incorporation of ferulate into the cell wall. May act as arabinoxylan feruloyl transferase. This Oryza sativa subsp. japonica (Rice) protein is Acyl transferase 9.